Reading from the N-terminus, the 580-residue chain is Cyclin-K (580 aa).

The disordered stretch occupies residues 262–580 (KQQMPHHTPH…GGLGRAAWMR (319 aa)). 2 stretches are compositionally biased toward low complexity: residues 263–277 (QQMP…QQPP) and 285–321 (VPQV…QQPK). Phosphoserine is present on residues S324, S328, S329, and S340. Residues 377–386 (PLAAALGEAE) are compositionally biased toward low complexity. The span at 400 to 426 (QIPPPAHPAPVHQPPPLPHRPPPPPPS) shows a compositional bias: pro residues. Residues 427–444 (SYMTGMSTTSSYMSGEGY) are compositionally biased toward low complexity. The segment covering 477–568 (VYPPNPPPPP…PPPIPPPGMP (92 aa)) has biased composition (pro residues).

It belongs to the cyclin family. Cyclin C subfamily. Regulatory subunit of cyclin-dependent kinases. Identified in a complex with a kinase and the RNA polymerase II holoenzyme. Interacts with POLR2A. Interacts with CDK12 and CDK13. Interacts with CDK9 according to PubMed:10574912; does not interact with CDK9 according to PubMed:22012619. In terms of assembly, (Microbial infection) Interacts with human herpes virus 1 (HHV-1) transcriptional regulator ICP22. As to expression, widely expressed. Highest levels in testis.

Its subcellular location is the nucleus. In terms of biological role, regulatory subunit of cyclin-dependent kinases that mediates activation of target kinases. Plays a role in transcriptional regulation via its role in regulating the phosphorylation of the C-terminal domain (CTD) of the large subunit of RNA polymerase II (POLR2A). The protein is Cyclin-K (CCNK) of Homo sapiens (Human).